A 539-amino-acid chain; its full sequence is Glucose-6-phosphate isomerase (539 aa).

Glu-349 serves as the catalytic Proton donor. Active-site residues include His-380 and Lys-508.

It belongs to the GPI family.

Its subcellular location is the cytoplasm. The enzyme catalyses alpha-D-glucose 6-phosphate = beta-D-fructose 6-phosphate. It functions in the pathway carbohydrate biosynthesis; gluconeogenesis. The protein operates within carbohydrate degradation; glycolysis; D-glyceraldehyde 3-phosphate and glycerone phosphate from D-glucose: step 2/4. Functionally, catalyzes the reversible isomerization of glucose-6-phosphate to fructose-6-phosphate. The sequence is that of Glucose-6-phosphate isomerase from Caulobacter sp. (strain K31).